We begin with the raw amino-acid sequence, 479 residues long: Flap endonuclease 1 (479 aa).

The N-domain stretch occupies residues 1–106 (MGIKGLTKFI…SELEKRGEKR (106 aa)). Residue Asp34 coordinates Mg(2+). Arg47 and Arg72 together coordinate DNA. The Mg(2+) site is built by Asp88, Glu160, Glu162, Asp181, and Asp183. The tract at residues 124 to 266 (EIKKQSGRTV…KTAYNLIKEY (143 aa)) is I-domain. A DNA-binding site is contributed by Glu160. 2 residues coordinate DNA: Gly244 and Asp246. Asp246 contacts Mg(2+). Positions 349-357 (TQRRLDTFF) are interaction with PCNA. Residues 379–455 (AKGKGKKREL…NSDSGNIKNE (77 aa)) are disordered. Residues 403 to 428 (NIKDEKKNTDKMDELKNKSDENFVKD) show a composition bias toward basic and acidic residues.

This sequence belongs to the XPG/RAD2 endonuclease family. FEN1 subfamily. Interacts with PCNA. Three molecules of FEN1 bind to one PCNA trimer with each molecule binding to one PCNA monomer. PCNA stimulates the nuclease activity without altering cleavage specificity. Mg(2+) serves as cofactor. Phosphorylated. Phosphorylation upon DNA damage induces relocalization to the nuclear plasma.

Its subcellular location is the nucleus. The protein resides in the nucleolus. It is found in the nucleoplasm. The protein localises to the mitochondrion. Structure-specific nuclease with 5'-flap endonuclease and 5'-3' exonuclease activities involved in DNA replication and repair. During DNA replication, cleaves the 5'-overhanging flap structure that is generated by displacement synthesis when DNA polymerase encounters the 5'-end of a downstream Okazaki fragment. It enters the flap from the 5'-end and then tracks to cleave the flap base, leaving a nick for ligation. Also involved in the long patch base excision repair (LP-BER) pathway, by cleaving within the apurinic/apyrimidinic (AP) site-terminated flap. Acts as a genome stabilization factor that prevents flaps from equilibrating into structures that lead to duplications and deletions. Also possesses 5'-3' exonuclease activity on nicked or gapped double-stranded DNA, and exhibits RNase H activity. Also involved in replication and repair of rDNA and in repairing mitochondrial DNA. This Plasmodium chabaudi chabaudi protein is Flap endonuclease 1.